The following is a 284-amino-acid chain: uncharacterized protein (284 aa).

Residues 236-284 (IDITNEADSSEIIDSEPSNKDETEKPSAQETDPFDGKPVDIKDDELPFD) form a disordered region. 2 stretches are compositionally biased toward basic and acidic residues: residues 252-262 (PSNKDETEKPS) and 269-284 (FDGKPVDIKDDELPFD).

This is an uncharacterized protein from Bacillus subtilis (strain 168).